The following is a 416-amino-acid chain: GTPase ERA1, chloroplastic (416 aa).

A chloroplast-targeting transit peptide spans 1-53; the sequence is MELGLALRLVAPPPLLPCLSRRALSLPPDFVSSRVLRGRRIHASRLKHGAGVV. The 171-residue stretch at 117-287 folds into the Era-type G domain; that stretch reads RSGYVAVLGK…KEWILSKLPL (171 aa). Residues 125 to 132 form a G1 region; sequence GKPNVGKS. 125-132 serves as a coordination point for GTP; that stretch reads GKPNVGKS. A G2 region spans residues 151 to 155; the sequence is QTTRH. A G3 region spans residues 172–175; it reads DTPG. Residues 172 to 176 and 237 to 240 each bind GTP; these read DTPGV and NKKD. The tract at residues 237–240 is G4; it reads NKKD. Residues 266–268 form a G5 region; the sequence is ISA. The KH type-2 domain occupies 318–395; sequence YRQEIPYSCQ…YLEVEVKVKE (78 aa).

The protein belongs to the TRAFAC class TrmE-Era-EngA-EngB-Septin-like GTPase superfamily. Era GTPase family.

It is found in the plastid. The protein localises to the chloroplast stroma. The protein resides in the chloroplast nucleoid. In terms of biological role, nuclear genome-encoded probable GTPase involved in ribosome biogenesis in chloroplasts. Plays a role in 16S rRNA maturation in plastids and may contribute to the assembly of the small (30S) ribosomal subunit. The chain is GTPase ERA1, chloroplastic from Zea mays (Maize).